Reading from the N-terminus, the 402-residue chain is Multidrug resistance protein MdtH (402 aa).

Residues methionine 1–lysine 12 are Cytoplasmic-facing. Residues tyrosine 13–isoleucine 33 form a helical membrane-spanning segment. The Periplasmic portion of the chain corresponds to serine 34–glutamate 98. The helical transmembrane segment at proline 99 to phenylalanine 116 threads the bilayer. At aspartate 117–serine 138 the chain is on the cytoplasmic side. Residues leucine 139 to leucine 159 form a helical membrane-spanning segment. The Periplasmic portion of the chain corresponds to glutamine 160–arginine 164. The chain crosses the membrane as a helical span at residues leucine 165–leucine 185. Over proline 186–tyrosine 213 the chain is Cytoplasmic. A helical membrane pass occupies residues valine 214 to methionine 234. At valine 235–alanine 243 the chain is on the periplasmic side. The helical transmembrane segment at alanine 244–alanine 264 threads the bilayer. Residues arginine 265–arginine 276 lie on the Cytoplasmic side of the membrane. A helical membrane pass occupies residues leucine 277 to leucine 297. The Periplasmic portion of the chain corresponds to glutamine 298 to glutamine 299. Residues leucine 300–threonine 320 traverse the membrane as a helical segment. Over leucine 321 to arginine 339 the chain is Cytoplasmic. A helical membrane pass occupies residues leucine 340 to glycine 360. Residues lysine 361–glutamate 367 lie on the Periplasmic side of the membrane. Residues leucine 368–phenylalanine 388 form a helical membrane-spanning segment. The Cytoplasmic segment spans residues serine 389–alanine 402.

Belongs to the major facilitator superfamily. DHA1 family. MdtH (TC 2.A.1.2.21) subfamily.

The protein resides in the cell inner membrane. This is Multidrug resistance protein MdtH from Salmonella schwarzengrund (strain CVM19633).